The chain runs to 93 residues: Small ribosomal subunit protein uS19 (93 aa).

This sequence belongs to the universal ribosomal protein uS19 family.

In terms of biological role, protein S19 forms a complex with S13 that binds strongly to the 16S ribosomal RNA. The protein is Small ribosomal subunit protein uS19 of Ehrlichia chaffeensis (strain ATCC CRL-10679 / Arkansas).